A 71-amino-acid chain; its full sequence is U-scoloptoxin(21)-Sm1a (71 aa).

Residues 1–21 form the signal peptide; sequence MKSVIFALFLVYLLIVRAAEA. Residues 45-71 form a disordered region; it reads IELANDPNGPGRRRRAPAENEDFLKHS. The span at 60-71 shows a compositional bias: basic and acidic residues; it reads APAENEDFLKHS.

The protein belongs to the scoloptoxin-21 family. As to expression, expressed by the venom gland.

Its subcellular location is the secreted. The sequence is that of U-scoloptoxin(21)-Sm1a from Scolopendra morsitans (Tanzanian blue ringleg centipede).